The primary structure comprises 196 residues: GTP cyclohydrolase-2 (196 aa).

49-53 (RVHSE) is a binding site for GTP. Zn(2+) is bound by residues cysteine 54, cysteine 65, and cysteine 67. Residues glutamine 70, 92–94 (EGR), and threonine 114 contribute to the GTP site. Aspartate 126 functions as the Proton acceptor in the catalytic mechanism. Arginine 128 functions as the Nucleophile in the catalytic mechanism. The GTP site is built by threonine 149 and lysine 154.

It belongs to the GTP cyclohydrolase II family. Homodimer. Zn(2+) serves as cofactor.

It catalyses the reaction GTP + 4 H2O = 2,5-diamino-6-hydroxy-4-(5-phosphoribosylamino)-pyrimidine + formate + 2 phosphate + 3 H(+). It functions in the pathway cofactor biosynthesis; riboflavin biosynthesis; 5-amino-6-(D-ribitylamino)uracil from GTP: step 1/4. Functionally, catalyzes the conversion of GTP to 2,5-diamino-6-ribosylamino-4(3H)-pyrimidinone 5'-phosphate (DARP), formate and pyrophosphate. This is GTP cyclohydrolase-2 from Yersinia pestis.